Here is a 991-residue protein sequence, read N- to C-terminus: Phosphate metabolism protein 7 (991 aa).

Residues 1 to 9 (MADSSSTSA) are Extracellular-facing. Residues 10–30 (FISTLIIYGLTAVVFVWLFLL) form a helical membrane-spanning segment. The Cytoplasmic segment spans residues 31–91 (LRPKNRRVYE…TSVDGYFLLR (61 aa)). A helical membrane pass occupies residues 92–112 (YIGIVGSLSFVGCLLLLPILL). Residues 113–138 (PVNATNGNNLQGFELLSFSNVTNKNR) are Extracellular-facing. Residues asparagine 115 and asparagine 132 are each glycosylated (N-linked (GlcNAc...) asparagine). The helical transmembrane segment at 139–159 (FYAHVFLSWIFFGLFTYVIYK) threads the bilayer. At 160-388 (ELYYYVVFRH…ERHSRRAVAN (229 aa)) the chain is on the cytoplasmic side. The chain crosses the membrane as a helical span at residues 389-409 (TIMVLLIIFWAFPVAVVGIIS). At 410-437 (NVNFLTDKVPFLRFINNMPTFLMGVITG) the chain is on the extracellular side. The chain crosses the membrane as a helical span at residues 438 to 458 (LLPTIALVVLMSLVPPFIVML). The Cytoplasmic segment spans residues 459-471 (GKLSGCVTRQETD). A helical transmembrane segment spans residues 472–492 (LYSQAWYYAFAVIQIFLVVTA). Over 493 to 523 (TSSASSTVDSIIDRPRSAMTLLANNLPKASN) the chain is Extracellular. Residues 524–544 (FYIMYFILKGLTGPTWTILQA) traverse the membrane as a helical segment. The Cytoplasmic portion of the chain corresponds to 545 to 582 (VNLLLSKVLGRVLDSTPRQKWNRYNTLATPRMGIVYPG). A helical transmembrane segment spans residues 583-603 (IEILVCIYICYSIIAPILLFF). Residue serine 604 is a topological domain, extracellular. Residues 605-625 (TVMLTLLYVAYLYNLNYVFGF) form a helical membrane-spanning segment. Residues 626-637 (SFDLKGRNYPRA) are Cytoplasmic-facing. The helical transmembrane segment at 638-658 (LFQIFVGIYLSEVCLLGLFIM) threads the bilayer. The Extracellular segment spans residues 659-661 (AKT). A helical transmembrane segment spans residues 662 to 682 (WGPLVLEVFWIVVTALAHIYM). The Cytoplasmic portion of the chain corresponds to 683-991 (KRKFIPLFDA…PPDYEPEAKK (309 aa)). Residues 749-787 (KANLIPDNDGSSENGTPSNPFESGSERASLSGSNAESDS) are disordered. Polar residues predominate over residues 757 to 785 (DGSSENGTPSNPFESGSERASLSGSNAES).

This sequence belongs to the CSC1 (TC 1.A.17) family.

It localises to the cell membrane. Functionally, acts as an osmosensitive calcium-permeable cation channel. This Saccharomyces cerevisiae (strain ATCC 204508 / S288c) (Baker's yeast) protein is Phosphate metabolism protein 7 (PHM7).